Reading from the N-terminus, the 106-residue chain is Nucleoid-associated protein DP1429 (106 aa).

It belongs to the YbaB/EbfC family. As to quaternary structure, homodimer.

Its subcellular location is the cytoplasm. It localises to the nucleoid. In terms of biological role, binds to DNA and alters its conformation. May be involved in regulation of gene expression, nucleoid organization and DNA protection. This chain is Nucleoid-associated protein DP1429, found in Desulfotalea psychrophila (strain LSv54 / DSM 12343).